The following is a 184-amino-acid chain: uncharacterized protein (184 aa).

This is an uncharacterized protein from Caenorhabditis elegans.